A 72-amino-acid polypeptide reads, in one-letter code: UPF0154 protein BH2350 (72 aa).

A helical transmembrane segment spans residues 3–23 (WMILLWITLGIVIGIAIGFFI).

Belongs to the UPF0154 family.

The protein localises to the membrane. The sequence is that of UPF0154 protein BH2350 from Halalkalibacterium halodurans (strain ATCC BAA-125 / DSM 18197 / FERM 7344 / JCM 9153 / C-125) (Bacillus halodurans).